The chain runs to 451 residues: Secreted RxLR effector protein 111 (451 aa).

Positions 1-19 (MRGTLATALLLVASCRIAA) are cleaved as a signal peptide. The RxLR-dEER motif lies at 48 to 69 (RFLRDNREQRVALALTAANESR). N-linked (GlcNAc...) asparagine glycosylation occurs at N66. Composition is skewed to polar residues over residues 175 to 184 (RKTLSKTQFK) and 413 to 426 (SPASQSRSNNQRTG). Disordered regions lie at residues 175–194 (RKTLSKTQFKNPAASKSTKR) and 404–451 (IPLQ…NKHA). Positions 437 to 451 (PERDSFRHIESNKHA) are enriched in basic and acidic residues.

This sequence belongs to the RxLR effector family.

It localises to the secreted. The protein localises to the host nucleus. Functionally, secreted effector that acts as an elicitor that induces cell death in host plant cells. In Plasmopara viticola (Downy mildew of grapevine), this protein is Secreted RxLR effector protein 111.